A 38-amino-acid chain; its full sequence is MNKPNPNKQTVELNRTSLYWGLLLIFVLAVLFSSYIFN.

A helical membrane pass occupies residues 17–37; it reads SLYWGLLLIFVLAVLFSSYIF.

It belongs to the PsbL family. In terms of assembly, PSII is composed of 1 copy each of membrane proteins PsbA, PsbB, PsbC, PsbD, PsbE, PsbF, PsbH, PsbI, PsbJ, PsbK, PsbL, PsbM, PsbT, PsbX, PsbY, PsbZ, Psb30/Ycf12, at least 3 peripheral proteins of the oxygen-evolving complex and a large number of cofactors. It forms dimeric complexes.

The protein localises to the plastid. The protein resides in the chloroplast thylakoid membrane. One of the components of the core complex of photosystem II (PSII). PSII is a light-driven water:plastoquinone oxidoreductase that uses light energy to abstract electrons from H(2)O, generating O(2) and a proton gradient subsequently used for ATP formation. It consists of a core antenna complex that captures photons, and an electron transfer chain that converts photonic excitation into a charge separation. This subunit is found at the monomer-monomer interface and is required for correct PSII assembly and/or dimerization. The polypeptide is Photosystem II reaction center protein L (Tupiella akineta (Green alga)).